The primary structure comprises 294 residues: MPEQGLADAFGVTEEARAKINLALHVTGQRPDGYHLLDMLVTFADCGDRLGFLPAQADAFTLSGRFGETLAGDGGANLVIRARDLLREAVGTLAFPVHIHLQKNLPVASGIGGGSADAAAALRGLMRLWGTRLPVAALATLALKLGADVPMCLESRPLIARGIGEEIEAVPDLPAFAMVLANPLKGVSTPEVFRRLKAKNNPPLTLAQTAGWLATIGAARNDLEPPAREAVPEIAAISAMLQAEGALLARMSGSGATCFGIFADMAAARDAAAALHEARPDWYFQATETVSGGM.

Residue lysine 19 is part of the active site. An ATP-binding site is contributed by 106-116 (PVASGIGGGSA). Aspartate 148 is a catalytic residue.

It belongs to the GHMP kinase family. IspE subfamily.

The catalysed reaction is 4-CDP-2-C-methyl-D-erythritol + ATP = 4-CDP-2-C-methyl-D-erythritol 2-phosphate + ADP + H(+). It participates in isoprenoid biosynthesis; isopentenyl diphosphate biosynthesis via DXP pathway; isopentenyl diphosphate from 1-deoxy-D-xylulose 5-phosphate: step 3/6. In terms of biological role, catalyzes the phosphorylation of the position 2 hydroxy group of 4-diphosphocytidyl-2C-methyl-D-erythritol. The chain is 4-diphosphocytidyl-2-C-methyl-D-erythritol kinase from Rhizobium etli (strain ATCC 51251 / DSM 11541 / JCM 21823 / NBRC 15573 / CFN 42).